Reading from the N-terminus, the 179-residue chain is Cytochrome c-type biogenesis protein CcmE (179 aa).

Residues 1–8 (MNPRRKSR) lie on the Cytoplasmic side of the membrane. The helical; Signal-anchor for type II membrane protein transmembrane segment at 9 to 29 (LTIILFVLLGVTIASSLVLYA) threads the bilayer. At 30–179 (LRQNIDLFYT…AVNSVEEGKK (150 aa)) the chain is on the periplasmic side. Heme is bound by residues H131 and Y135. Basic and acidic residues-rich tracts occupy residues 138–148 (PDLSEKMEQVH) and 161–179 (ESDR…EGKK). The tract at residues 138 to 179 (PDLSEKMEQVHKPMGISNQDMQGESDRDRLDKAVNSVEEGKK) is disordered.

This sequence belongs to the CcmE/CycJ family.

It localises to the cell inner membrane. Its function is as follows. Heme chaperone required for the biogenesis of c-type cytochromes. Transiently binds heme delivered by CcmC and transfers the heme to apo-cytochromes in a process facilitated by CcmF and CcmH. The chain is Cytochrome c-type biogenesis protein CcmE from Mannheimia succiniciproducens (strain KCTC 0769BP / MBEL55E).